Reading from the N-terminus, the 154-residue chain is Ecotin-like protein 2 (154 aa).

It belongs to the protease inhibitor I11 (ecotin) family.

The sequence is that of Ecotin-like protein 2 from Trypanosoma brucei brucei (strain 927/4 GUTat10.1).